We begin with the raw amino-acid sequence, 568 residues long: MAGIDNKAAVMGEWFDCSTTNHRKRSKAELGREFSLNYIKNEDSLQTTFQESSRGALRERIAARSGFNAPWLNTEDILQSKSLTISSPGLSPATLLESPVFLSNPLLSPTTGKLSSVPSDKAKAELFDDITTSLAFQTISGSGLDPTNIALEPDDSQDYEERQLGGLGDSMACCAPADDGYNWRKYGQKLVKGSEYPRSYYKCTHPNCEAKKKVERSREGHIIEIIYTGDHIHSKPPPNRRSGIGSSGTGQDMQIDATEYEGFAGTNENIEWTSPVSAELEYGSHSGSMQVQNGTHQFGYGDAAADALYRDENEDDRTSHMSVSLTYDGEVEESESKRRKLEAYATETSGSTRASREPRVVVQTTSDIDILDDGYRWRKYGQKVVKGNPNPRSYYKCTANGCTVTKHVERASDDFKSVLTTYIGKHTHVVPAARNSSHVGAGSSGTLQGSLATQTHNHNVHYPMPHSRSEGLATANSSLFDFQSHLRHPTGFSVYIGQSELSDLSMPGLTIGQEKLTSLQAPDIGDPTGLMLQLAAQPKVEPVSPQQGLDLSASSLICREMLSRLRQI.

Residues 172 to 236 constitute a DNA-binding region (WRKY 1); the sequence is ACCAPADDGY…YTGDHIHSKP (65 aa). Residues C203, C208, H231, and H233 each coordinate Zn(2+). 2 disordered regions span residues 230-252 and 337-360; these read DHIH…TGQD and KRRK…EPRV. The segment at residues 366 to 431 is a DNA-binding region (WRKY 2); sequence SDIDILDDGY…YIGKHTHVVP (66 aa). Zn(2+) is bound by residues C397, C402, H426, and H428.

This sequence belongs to the WRKY group I family.

It is found in the nucleus. Transcription factor. Interacts specifically with the W box (5'-(T)TGAC[CT]-3'), a frequently occurring elicitor-responsive cis-acting element. The protein is Probable WRKY transcription factor 34 (WRKY34) of Arabidopsis thaliana (Mouse-ear cress).